Consider the following 198-residue polypeptide: MLPAAARPLWGPCLGLRAAAFRLARRQVPCVCAVRHMRSSGHQRCEALAGAPLDNAPKEYPPKIQQLVQDIASLTLLEISDLNELLKKTLKIQDVGLVPMGGVMSGAVPAAAAQEAVEEDIPIAKERTHFTVRLTEAKPVDKVKLIKEIKNYIQGINLVQAKKLVESLPQEIKANVAKAEAEKIKAALEAVGGTVVLE.

A mitochondrion-targeting transit peptide spans 1 to 36 (MLPAAARPLWGPCLGLRAAAFRLARRQVPCVCAVRH). Residues K125, K138, K142, and K144 each carry the N6-acetyllysine modification. K150 bears the N6-acetyllysine; alternate mark. K150 bears the N6-succinyllysine; alternate mark. K150 participates in a covalent cross-link: Glycyl lysine isopeptide (Lys-Gly) (interchain with G-Cter in ubiquitin). At K162 the chain carries N6-succinyllysine. K163 and K173 each carry N6-acetyllysine. K178 carries the post-translational modification N6-acetyllysine; alternate. K178 bears the N6-succinyllysine; alternate mark. Position 185 is an N6-acetyllysine (K185).

The protein belongs to the bacterial ribosomal protein bL12 family. In terms of assembly, component of the mitochondrial large ribosomal subunit (mt-LSU). Mature mammalian 55S mitochondrial ribosomes consist of a small (28S) and a large (39S) subunit. The 28S small subunit contains a 12S ribosomal RNA (12S mt-rRNA) and 30 different proteins. The 39S large subunit contains a 16S rRNA (16S mt-rRNA), a copy of mitochondrial valine transfer RNA (mt-tRNA(Val)), which plays an integral structural role, and 52 different proteins. bL12m interacts with NOA1. Two mature forms are produced by differential two-step proteolytic cleavage. Cleaved by the mitochondrial processing protease to produce the long mature form and subsequently by the mitochondrial intermediate protease to produce the short mature form. In terms of processing, in the presence of CUL3, undergoes 'Lys-63'-linked ubiquitination at Lys-150 which results in proteasomal degradation.

It is found in the mitochondrion matrix. As a component of the mitochondrial large ribosomal subunit, plays a role in mitochondrial translation. When present in mitochondria as a free protein not associated with the ribosome, associates with mitochondrial RNA polymerase POLRMT to activate transcription. Required for POLRMT stability. The polypeptide is Large ribosomal subunit protein bL12m (MRPL12) (Homo sapiens (Human)).